We begin with the raw amino-acid sequence, 109 residues long: Ferredoxin CarAc (109 aa).

The 2Fe-2S ferredoxin-type domain occupies A3 to Q108. [2Fe-2S] cluster-binding residues include C43, C49, C52, and C89.

This sequence belongs to the adrenodoxin/putidaredoxin family. Monomer. Carbazole 1,9a-dioxygenase complex consists of a terminal oxygenase component CarAa, a ferredoxin reductase component fdr and a ferredoxin component CarAc. It depends on [2Fe-2S] cluster as a cofactor.

Part of the multicomponent carbazole 1,9a-dioxygenase (CARDO), that converts carbazole (CAR) into 2-aminobiphenyl-2,3-diol. Acts as a mediator in the electron transfer from fdr to CarAa. This chain is Ferredoxin CarAc (carAc), found in Sphingomonas sp.